The following is a 695-amino-acid chain: Segment polarity protein dishevelled homolog DVL-1 (695 aa).

One can recognise a DIX domain in the interval 1–85; sequence MAETKIIYHM…RVVSWLVLAE (85 aa). The tract at residues 89 to 237 is disordered; sequence SDAGSQGTDS…LRQADRASSF (149 aa). Residues 142-151 show a composition bias toward basic residues; the sequence is SHRRERARRR. Residues 152-171 are compositionally biased toward basic and acidic residues; it reads NREEAARTNGHPRGDRRRDV. A compositionally biased stretch (low complexity) spans 176–192; it reads DSASTALSSELESSSFV. Phosphoserine is present on Ser194. Over residues 200–214 the composition is skewed to low complexity; that stretch reads TSRLSSSTEQSTSSR. Residues 215-228 are compositionally biased toward basic residues; the sequence is LIRKHKRRRRKQRL. The PDZ domain maps to 251 to 323; it reads TVTLNMERHH…NDDAVRVLRE (73 aa). Positions 425-499 constitute a DEP domain; sequence PDSGLEIRDR…SEQCYYVFGD (75 aa). The interval 543 to 667 is disordered; sequence PGPPPCFPPA…PGGPPVRELA (125 aa). Residues 551 to 580 show a composition bias toward low complexity; that stretch reads PAYQDPGFSYGSGSTGSQQSEGSKSSGSTR. A compositionally biased stretch (polar residues) spans 625-636; sequence SRGSSPRSQASA.

This sequence belongs to the DSH family. In terms of assembly, interacts with CXXC4. Interacts (via PDZ domain) with NXN. Interacts with BRD7 and INVS. Interacts (via PDZ domain) with VANGL1 and VANGL2 (via C-terminus). Interacts with ARRB1; the interaction is enhanced by phosphorylation of DVL1. Interacts with CYLD. Interacts (via PDZ domain) with RYK. Self-associates (via DIX domain) and forms higher homooligomers. Interacts (via PDZ domain) with DACT1 and FZD7, where DACT1 and FZD7 compete for the same binding site. Interacts (via DEP domain) with MUSK; the interaction is direct and mediates the formation a DVL1, MUSK and PAK1 ternary complex involved in AChR clustering. Interacts (via PDZ domain) with TMEM88. Interacts with DCDC2. Interacts with FOXK2. Interacts with PKD1 (via extracellular domain). Interacts (via PDZ domain) with CCDC88C/DAPLE; competes with CCDC88C for binding to frizzled receptor FZD7 and dissociates from CCDC88C following initiation of non-canonical Wnt signaling when CCDC88C displaces DVL1 from ligand-activated FZD7. Ubiquitinated; undergoes both 'Lys-48'-linked ubiquitination, leading to its subsequent degradation by the ubiquitin-proteasome pathway, and 'Lys-63'-linked ubiquitination. The interaction with INVS is required for ubiquitination. Deubiquitinated by CYLD, which acts on 'Lys-63'-linked ubiquitin chains.

It is found in the cell membrane. The protein resides in the cytoplasm. Its subcellular location is the cytosol. It localises to the cytoplasmic vesicle. Functionally, participates in Wnt signaling by binding to the cytoplasmic C-terminus of frizzled family members and transducing the Wnt signal to down-stream effectors. Plays a role both in canonical and non-canonical Wnt signaling. Plays a role in the signal transduction pathways mediated by multiple Wnt genes. Required for LEF1 activation upon WNT1 and WNT3A signaling. DVL1 and PAK1 form a ternary complex with MUSK which is important for MUSK-dependent regulation of AChR clustering during the formation of the neuromuscular junction (NMJ). In Homo sapiens (Human), this protein is Segment polarity protein dishevelled homolog DVL-1 (DVL1).